We begin with the raw amino-acid sequence, 118 residues long: Acidic phospholipase A2 (118 aa).

Residues tyrosine 25, glycine 27, and glycine 29 each coordinate Ca(2+). Histidine 45 is a catalytic residue. Aspartate 46 serves as a coordination point for Ca(2+). Aspartate 86 is a catalytic residue.

Belongs to the phospholipase A2 family. Group II subfamily. D49 sub-subfamily. Ca(2+) serves as cofactor. In terms of processing, six disulfide bonds are present. In terms of tissue distribution, expressed by the venom gland.

The protein resides in the secreted. The catalysed reaction is a 1,2-diacyl-sn-glycero-3-phosphocholine + H2O = a 1-acyl-sn-glycero-3-phosphocholine + a fatty acid + H(+). In terms of biological role, PLA2 catalyzes the calcium-dependent hydrolysis of the 2-acyl groups in 3-sn-phosphoglycerides. This chain is Acidic phospholipase A2, found in Bitis gabonica (Gaboon adder).